The following is a 920-amino-acid chain: MDWSQTLNLPKTDFPMRANLAQREPQFLKFWQENDIFKKMLEKNKNNKKFILHDGPPYANGDIHLGHALNKVLKDIVNKYKSLQGYYTPYIPGWDTHGLPIEQQVIKKLEVNRHEVDPVEFRKKCKEFALSYIDIQRQQFKRLGVFGEWENPYMTLDPKFEARQIRVFGEMAKKGYIYKGLKPVYWCPSCETALAEAEIEYQEDRTYSIYVKFEVIDDKGLFSNLPIGDKKVYIVIWTTTTWTLPGNLAIALNADFDYSLIDIGNEILVVASELVERVMKTNKIEQYKEIARFKGKDLEYVKCKHPFLDRTSLVILGEHVTLEAGTGCVHTAPGHGEEDFEVCQRYNIHVIVPVDNKGYLTKEAGKFAGLFYEDSNKEIAKELEASGHLLGVEKITHQYPHCWRCKNPVIFRATEQWFASVKGFRDQALKAVDDVKWVPEWGRDRIYNMIVDRQDWCISRQRIWGVPIPIFYCKNCRKELITDETIDYIAKIFEKEGSDAWFSKDVKELLPEGVKCPVCGCSEFEKETDIMDVWFDSGSSHAYVLESREDLEWPCDMYLEGNDQYRGWFQSSLLTAVATKGRAPYRIVLTHGFVVDGEGKKMSKSEGNVISPFDIINEFGADILRLWCVSADYTTDMRISKDIIKQLTEIYRKIRNTARFLLGNLYDFNPKTDKVGYENLKEIDKWALQRLYKLIEKVTKAYEEYDYNQVYHLVHNFCVIDMSNLYLDINKDRLYASKSESLDRRSAQTVMYEILIALTILIAPILSFTAEEIWQNIIFKEEDAESVFLTRWPSINEDILRDEALREKWDKIIEIKDIVSKQLEIARNEKLIGSSLDSKVKIFAKCDIKRFIEENKDIIQEVLIVSQLDVEESDSDQIKVEVYKADGSKCERCWKFDTMVGKNEESLNVCPRCYEVVKSK.

The 'HIGH' region motif lies at 57-67 (PYANGDIHLGH). Glu-560 is an L-isoleucyl-5'-AMP binding site. The 'KMSKS' region signature appears at 601 to 605 (KMSKS). Lys-604 lines the ATP pocket. Cys-890, Cys-893, Cys-910, and Cys-913 together coordinate Zn(2+).

The protein belongs to the class-I aminoacyl-tRNA synthetase family. IleS type 1 subfamily. As to quaternary structure, monomer. The cofactor is Zn(2+).

Its subcellular location is the cytoplasm. The enzyme catalyses tRNA(Ile) + L-isoleucine + ATP = L-isoleucyl-tRNA(Ile) + AMP + diphosphate. Its function is as follows. Catalyzes the attachment of isoleucine to tRNA(Ile). As IleRS can inadvertently accommodate and process structurally similar amino acids such as valine, to avoid such errors it has two additional distinct tRNA(Ile)-dependent editing activities. One activity is designated as 'pretransfer' editing and involves the hydrolysis of activated Val-AMP. The other activity is designated 'posttransfer' editing and involves deacylation of mischarged Val-tRNA(Ile). This Caldicellulosiruptor bescii (strain ATCC BAA-1888 / DSM 6725 / KCTC 15123 / Z-1320) (Anaerocellum thermophilum) protein is Isoleucine--tRNA ligase.